A 145-amino-acid chain; its full sequence is Maximins 3/H3 type 2 (145 aa).

An N-terminal signal peptide occupies residues 1-18; it reads MNFKYIVAVSFLIASAYA. 2 propeptides span residues 19-43 and 74-124; these read RSVQ…LREI and RTAE…KEKR. At Ile-144 the chain carries Isoleucine amide.

This sequence belongs to the bombinin family. Expressed by the skin glands.

It localises to the secreted. Its function is as follows. Maximin-3 shows antibacterial activity against both Gram-positive and Gram-negative bacteria. It also shows antimicrobial activity against the fungus C.albicans, but not against A.flavus nor P.uticale. It has little hemolytic activity. It possess a significant cytotoxicity against tumor cell lines. It possess a significant anti-HIV activity. It shows high spermicidal activity. Maximin-H3 shows antibacterial activity against both Gram-positive and Gram-negative bacteria. It also shows antimicrobial activity against the fungus C.albicans. Shows strong hemolytic activity. This is Maximins 3/H3 type 2 from Bombina maxima (Giant fire-bellied toad).